Consider the following 143-residue polypeptide: Transcriptional regulator MraZ (143 aa).

SpoVT-AbrB domains lie at 5-47 (TYAP…SQRE) and 76-119 (ASAE…DAEA).

This sequence belongs to the MraZ family. In terms of assembly, forms oligomers.

It is found in the cytoplasm. The protein resides in the nucleoid. The polypeptide is Transcriptional regulator MraZ (Leifsonia xyli subsp. xyli (strain CTCB07)).